Consider the following 263-residue polypeptide: Glucosamine-6-phosphate deaminase (263 aa).

Catalysis depends on D67, which acts as the Proton acceptor; for enolization step. N136 acts as the For ring-opening step in catalysis. Catalysis depends on H138, which acts as the Proton acceptor; for ring-opening step. The For ring-opening step role is filled by E143.

It belongs to the glucosamine/galactosamine-6-phosphate isomerase family. NagB subfamily. As to quaternary structure, homohexamer.

It carries out the reaction alpha-D-glucosamine 6-phosphate + H2O = beta-D-fructose 6-phosphate + NH4(+). It functions in the pathway amino-sugar metabolism; N-acetylneuraminate degradation; D-fructose 6-phosphate from N-acetylneuraminate: step 5/5. Functionally, catalyzes the reversible isomerization-deamination of glucosamine 6-phosphate (GlcN6P) to form fructose 6-phosphate (Fru6P) and ammonium ion. In Shewanella halifaxensis (strain HAW-EB4), this protein is Glucosamine-6-phosphate deaminase.